The primary structure comprises 393 residues: Dual-specificity RNA methyltransferase RlmN (393 aa).

Residue glutamate 114 is the Proton acceptor of the active site. A Radical SAM core domain is found at 120–359; it reads EDDRATLCVS…VIVRKTRGDD (240 aa). Cysteine 127 and cysteine 364 are disulfide-bonded. Positions 134, 138, and 141 each coordinate [4Fe-4S] cluster. Residues 188 to 189, serine 220, 242 to 244, and asparagine 321 each bind S-adenosyl-L-methionine; these read GE and SLH. Cysteine 364 (S-methylcysteine intermediate) is an active-site residue.

It belongs to the radical SAM superfamily. RlmN family. Requires [4Fe-4S] cluster as cofactor.

It localises to the cytoplasm. It carries out the reaction adenosine(2503) in 23S rRNA + 2 reduced [2Fe-2S]-[ferredoxin] + 2 S-adenosyl-L-methionine = 2-methyladenosine(2503) in 23S rRNA + 5'-deoxyadenosine + L-methionine + 2 oxidized [2Fe-2S]-[ferredoxin] + S-adenosyl-L-homocysteine. The enzyme catalyses adenosine(37) in tRNA + 2 reduced [2Fe-2S]-[ferredoxin] + 2 S-adenosyl-L-methionine = 2-methyladenosine(37) in tRNA + 5'-deoxyadenosine + L-methionine + 2 oxidized [2Fe-2S]-[ferredoxin] + S-adenosyl-L-homocysteine. In terms of biological role, specifically methylates position 2 of adenine 2503 in 23S rRNA and position 2 of adenine 37 in tRNAs. m2A2503 modification seems to play a crucial role in the proofreading step occurring at the peptidyl transferase center and thus would serve to optimize ribosomal fidelity. This Actinobacillus pleuropneumoniae serotype 5b (strain L20) protein is Dual-specificity RNA methyltransferase RlmN.